The primary structure comprises 320 residues: Pyrroline-5-carboxylate reductase 2 (320 aa).

N-acetylserine is present on S2. NADP(+) contacts are provided by residues 6–11 and S34; that span reads IGAGQL. The NADPH site is built by A8, Q10, L11, S34, E36, N56, V70, K71, and A97. Residues N56, 69 to 72, and 95 to 97 contribute to the NADP(+) site; these read AVKP and CAA. Residue E164 coordinates L-proline. N230 provides a ligand contact to NADPH. 2 residues coordinate L-proline: A237 and T238. Residues 298–320 are disordered; it reads TTLTPTSSGKLLTRSPVPGGKKD. Residue S304 is modified to Phosphoserine.

Belongs to the pyrroline-5-carboxylate reductase family. As to quaternary structure, homodecamer; composed of 5 homodimers. Interacts with LTO1.

Its subcellular location is the cytoplasm. It is found in the mitochondrion. The enzyme catalyses L-proline + NADP(+) = (S)-1-pyrroline-5-carboxylate + NADPH + 2 H(+). It carries out the reaction L-proline + NAD(+) = (S)-1-pyrroline-5-carboxylate + NADH + 2 H(+). It functions in the pathway amino-acid biosynthesis; L-proline biosynthesis; L-proline from L-glutamate 5-semialdehyde: step 1/1. Oxidoreductase that catalyzes the last step in proline biosynthesis, which corresponds to the reduction of pyrroline-5-carboxylate to L-proline using NAD(P)H. At physiologic concentrations, has higher specific activity in the presence of NADH. Involved in cellular response to oxidative stress. In some cell types, such as erythrocytes, its primary function may be the generation of NADP(+). This is Pyrroline-5-carboxylate reductase 2 (PYCR2) from Bos taurus (Bovine).